Reading from the N-terminus, the 333-residue chain is Adenosine deaminase (333 aa).

Residues histidine 12 and histidine 14 each coordinate Zn(2+). Positions 14, 16, and 170 each coordinate substrate. A Zn(2+)-binding site is contributed by histidine 197. Catalysis depends on glutamate 200, which acts as the Proton donor. Aspartate 278 lines the Zn(2+) pocket. Residue aspartate 279 participates in substrate binding.

This sequence belongs to the metallo-dependent hydrolases superfamily. Adenosine and AMP deaminases family. Adenosine deaminase subfamily. The cofactor is Zn(2+).

The catalysed reaction is adenosine + H2O + H(+) = inosine + NH4(+). It carries out the reaction 2'-deoxyadenosine + H2O + H(+) = 2'-deoxyinosine + NH4(+). Catalyzes the hydrolytic deamination of adenosine and 2-deoxyadenosine. This Salmonella paratyphi C (strain RKS4594) protein is Adenosine deaminase.